Reading from the N-terminus, the 117-residue chain is Large ribosomal subunit protein bL20 (117 aa).

This sequence belongs to the bacterial ribosomal protein bL20 family.

Binds directly to 23S ribosomal RNA and is necessary for the in vitro assembly process of the 50S ribosomal subunit. It is not involved in the protein synthesizing functions of that subunit. This Marinobacter nauticus (strain ATCC 700491 / DSM 11845 / VT8) (Marinobacter aquaeolei) protein is Large ribosomal subunit protein bL20.